The chain runs to 219 residues: Cytidylate kinase (219 aa).

Residue 9–17 (GPAGSGKTT) coordinates ATP.

Belongs to the cytidylate kinase family. Type 1 subfamily.

The protein localises to the cytoplasm. It catalyses the reaction CMP + ATP = CDP + ADP. The enzyme catalyses dCMP + ATP = dCDP + ADP. The sequence is that of Cytidylate kinase from Fervidobacterium nodosum (strain ATCC 35602 / DSM 5306 / Rt17-B1).